Reading from the N-terminus, the 679-residue chain is MHDKKSPMANSHYLKNLKQQFRNKNLIETTIHLVKCNDHDSLAFLARTYGVPPQLRHVVWPILLKYHPMCISPNITSNTISWDPITNDFILNDPFLKSKAPTDKQDKSDDENILPYDIESIILHDLKKYFHSRSNPAGSSSNANTTNIATPTPVSSSDASTISSMEVLSPSLDYEFQIIETLKNAIVKFLLKWSKIFKYENGLAWIALGLAEWYPIYPYETMSPFNETHSFYEVEDYVVLSGRKHALLSTNNGNNGNSNSSSNNTNNNNTNITSGMHNLSINTNTSLHNSPYISHTLSYLYKEYPLPFELRSKLPTKPIFSFSALFERLALVILHCPDTILAHKQLKNDSNASSSSKANSNFNTNYFPIISGGDLSFQTQVFFKVFSSILPELYQPLTEESSLQPSSSRNSWIYWWLKCSGAKALQRQDRGRVWDLLLGWRPKPNMDTINFFLNYNDKKMDHLYHDTPQCDNEQYWMKDWIALYNNDPFWFPDLDSMALGSKKFPYDYSVFKELILRNRYGGTQSKAQKDNTVPSPGSDSNDKSELKLPFSSIDPHMQLIFIFIAILQFNEFKLLEFEEAEISEFLNNVPLLTKFDDSSYRKLYENTESSITSLPSSPTTSTMASLQSSSNSSAHISNYHMLIEVGNDAKASHCFDDLLNMAGDIWRKWLWRELEESSL.

Residues G50–R441 form the Rab-GAP TBC domain. The segment covering N135–P153 has biased composition (low complexity). Disordered stretches follow at residues N135–A159, T250–T270, and Q524–S544. Polar residues predominate over residues Q524–D539.

The protein belongs to the OCA5 family.

The protein localises to the cytoplasm. Required for replication of brome mosaic virus (BMV), a positive-strand RNA virus. The protein is Oxidant-induced cell-cycle arrest protein 5 (OCA5) of Saccharomyces cerevisiae (strain JAY291) (Baker's yeast).